A 147-amino-acid polypeptide reads, in one-letter code: Protein SprT-like (147 aa).

One can recognise a SprT-like domain in the interval 9-142; sequence AKVKEISLTY…CGKCRGKLIL (134 aa). H65 is a Zn(2+) binding site. The active site involves E66. H69 contacts Zn(2+).

Belongs to the SprT family. Requires Zn(2+) as cofactor.

The protein resides in the cytoplasm. The chain is Protein SprT-like (yciD) from Lactococcus lactis subsp. lactis (strain IL1403) (Streptococcus lactis).